Consider the following 246-residue polypeptide: ATP synthase subunit a, chloroplastic (246 aa).

A run of 5 helical transmembrane segments spans residues 33–53, 99–119, 133–153, 201–221, and 222–242; these read VHGQ…GFGL, TIFL…WALI, INTT…AGIN, GVLV…LGLF, and TSAI…GESL.

This sequence belongs to the ATPase A chain family. F-type ATPases have 2 components, CF(1) - the catalytic core - and CF(0) - the membrane proton channel. CF(1) has five subunits: alpha(3), beta(3), gamma(1), delta(1), epsilon(1). CF(0) has four main subunits: a, b, b' and c.

It is found in the plastid. The protein localises to the chloroplast thylakoid membrane. In terms of biological role, key component of the proton channel; it plays a direct role in the translocation of protons across the membrane. The chain is ATP synthase subunit a, chloroplastic from Oltmannsiellopsis viridis (Marine flagellate).